Here is a 277-residue protein sequence, read N- to C-terminus: MKLKFTKMHGLGNDFIVIDAVNQQISLSPEQLRRLADRHLGVGCDQILLIEKAEGDADFRYRIFNADGGEVEQCGNGARCFVRYVHDHGMTDKQQVRIETLSGVVIPELEADGEVTVNMGVPKFDPVEIPFIAEQRAPTYSLSLDDRQVEISSVSMGNPHAVQVVSDLDNAPVLTEGPVIEKHSRFPQRVNAGYMQVVDPHHIRLRVYERGAGETLACGTGACAAAVAGIQRGLLESPVRVSFSTGDLFIRWEGENQPVWMTGPAVAVFDGEIELQF.

Residues Asn13, Gln46, and Asn65 each contribute to the substrate site. Residue Cys74 is the Proton donor of the active site. Substrate contacts are provided by residues 75–76, Asn158, Asn191, and 209–210; these read GN and ER. Catalysis depends on Cys218, which acts as the Proton acceptor. 219 to 220 is a substrate binding site; it reads GT.

Belongs to the diaminopimelate epimerase family. As to quaternary structure, homodimer.

The protein localises to the cytoplasm. It carries out the reaction (2S,6S)-2,6-diaminopimelate = meso-2,6-diaminopimelate. It functions in the pathway amino-acid biosynthesis; L-lysine biosynthesis via DAP pathway; DL-2,6-diaminopimelate from LL-2,6-diaminopimelate: step 1/1. Functionally, catalyzes the stereoinversion of LL-2,6-diaminopimelate (L,L-DAP) to meso-diaminopimelate (meso-DAP), a precursor of L-lysine and an essential component of the bacterial peptidoglycan. The protein is Diaminopimelate epimerase of Nitrosospira multiformis (strain ATCC 25196 / NCIMB 11849 / C 71).